A 655-amino-acid chain; its full sequence is Golgi integral membrane protein 4 (655 aa).

Gly-2 carries the N-myristoyl glycine lipid modification. Over 2–12 (GNGMCSRKQKR) the chain is Cytoplasmic. Residues 13–33 (IFQTLLLLTVVFGFLYGAMLY) traverse the membrane as a helical; Signal-anchor for type II membrane protein segment. Residues 34-655 (LELQTQLRKA…AEKSHRRAEM (622 aa)) are Lumenal-facing. The segment at 38–107 (TQLRKAEAVA…ETLNKGRQDS (70 aa)) is golgi targeting. A coiled-coil region spans residues 66–216 (EHRSRLEKSL…KQLKDTLNRI (151 aa)). The tract at residues 80–175 (LEHKKAKEDF…QELSKLKETV (96 aa)) is endosome targeting. Residues 122 to 145 (KSQHEELRKQHSDLEEEHRKQGED) are disordered. Basic and acidic residues predominate over residues 123–145 (SQHEELRKQHSDLEEEHRKQGED). Residues 176 to 220 (YNLREENRQLRKAHQDIHTQLQDVKTQVAEYKQLKDTLNRIPSFR) form a golgi targeting region. N-linked (GlcNAc...) asparagine glycosylation is present at Asn-229. Disordered stretches follow at residues 256-275 (QPNH…SSMQ) and 285-655 (EQNQ…RAEM). Composition is skewed to basic and acidic residues over residues 261 to 270 (AGPRRMEEKP), 290 to 307 (EPRE…RKAL), 319 to 328 (EHLEEEHDPS), and 348 to 360 (LDGH…EHST). Ser-328 bears the Phosphoserine mark. A compositionally biased stretch (polar residues) spans 361 to 370 (KAATNFQSPY). The span at 381–398 (ARRDEEAQRLREHQEALH) shows a compositional bias: basic and acidic residues. Low complexity-rich tracts occupy residues 399-423 (QQRL…MAQQ) and 433-442 (QQHQEQLRQQ). The span at 468 to 508 (AYDRDNQRQDEAEGDPGNRQELREPGHQEGDPEVEADRAAV) shows a compositional bias: basic and acidic residues. A Phosphoserine modification is found at Ser-540. The segment covering 567–589 (QQEDNVDEQYQDEGEEEVQEDLT) has biased composition (acidic residues). Tyr-576 carries the phosphotyrosine modification. Phosphothreonine is present on Thr-589. Over residues 590 to 620 (EEKKREMEHNVEETYGEHPDDKNNDGEEQGV) the composition is skewed to basic and acidic residues. Tyr-633 carries the post-translational modification Phosphotyrosine. The segment covering 633–642 (YEEEEDEEDG) has biased composition (acidic residues).

It belongs to the GOLIM4 family. Post-translationally, phosphorylated by c-AMP-dependent kinases most probably in its lumenal part. In terms of processing, O-glycosylated; modified by sialic acid residues. N-glycosylated; N-glycans are of the complex type and modified by sialic acid residues. Expressed by spermatozoa (at protein level).

It localises to the golgi apparatus. It is found in the golgi stack membrane. The protein localises to the endosome membrane. The protein resides in the membrane. Its function is as follows. Plays a role in endosome to Golgi protein trafficking; mediates protein transport along the late endosome-bypass pathway from the early endosome to the Golgi. In Mus musculus (Mouse), this protein is Golgi integral membrane protein 4 (Golim4).